Here is a 111-residue protein sequence, read N- to C-terminus: uncharacterized protein (111 aa).

3 consecutive transmembrane segments (helical) span residues 4 to 23, 39 to 61, and 65 to 84; these read LHQV…LGHV, IYLG…VLSA, and SGIQ…EAVL.

The protein localises to the cell membrane. This is an uncharacterized protein from Bacillus subtilis (strain 168).